The sequence spans 655 residues: p-hydroxybenzoic acid efflux pump subunit AaeB (655 aa).

The next 11 helical transmembrane spans lie at 13-33 (FAVK…HFQL), 38-58 (WAVL…GGEP), 69-89 (LRII…IAMI), 93-113 (LLMI…SSLV), 121-141 (WGLA…EPLL), 152-172 (EIVI…PRSI), 370-390 (LFWL…IAVV), 407-427 (FIYG…VIIP), 431-451 (QSML…GIEV), 459-479 (MGAL…TFHF), and 482-502 (FLDS…VILL).

The protein belongs to the aromatic acid exporter ArAE (TC 2.A.85) family.

The protein resides in the cell inner membrane. Its function is as follows. Forms an efflux pump with AaeA. Could function as a metabolic relief valve, allowing to eliminate certain compounds when they accumulate to high levels in the cell. The sequence is that of p-hydroxybenzoic acid efflux pump subunit AaeB from Escherichia coli (strain SMS-3-5 / SECEC).